A 258-amino-acid chain; its full sequence is Spindlin-2 (258 aa).

The interval 1 to 47 is disordered; sequence MKTPHKKATARQQTREIVDDHTLSASMRKKKISQKKQRGRPSSQTRR. A compositionally biased stretch (basic and acidic residues) spans 13-22; sequence QTREIVDDHT. The span at 27-39 shows a compositional bias: basic residues; the sequence is MRKKKISQKKQRG. 3 tudor-like domain regions span residues 50-99, 129-178, and 210-255; these read VGCR…LELH, IGKA…YQLL, and IGKH…YDLV. Histone H3K4me3 and H3R8me2a binding regions lie at residues E138 and 246 to 248; that span reads DFH.

This sequence belongs to the SPIN/STSY family. As to quaternary structure, interacts with C11orf84/SPINDOC.

It is found in the nucleus. Functionally, may be involved in the regulation of cell cycle progression. Exhibits H3K4me3-binding activity. The chain is Spindlin-2 (SPIN2) from Bos taurus (Bovine).